Here is a 149-residue protein sequence, read N- to C-terminus: Nucleoside diphosphate kinase 1 (149 aa).

Residues Lys10, Phe58, Arg86, Thr92, Arg103, and Asn113 each contribute to the ATP site. The active-site Pros-phosphohistidine intermediate is the His116.

This sequence belongs to the NDK family. The cofactor is Mg(2+).

It carries out the reaction a 2'-deoxyribonucleoside 5'-diphosphate + ATP = a 2'-deoxyribonucleoside 5'-triphosphate + ADP. It catalyses the reaction a ribonucleoside 5'-diphosphate + ATP = a ribonucleoside 5'-triphosphate + ADP. In terms of biological role, major role in the synthesis of nucleoside triphosphates other than ATP. The ATP gamma phosphate is transferred to the NDP beta phosphate via a ping-pong mechanism, using a phosphorylated active-site intermediate. This NDK is microtubule-associated. The polypeptide is Nucleoside diphosphate kinase 1 (NDPK1) (Pisum sativum (Garden pea)).